A 428-amino-acid polypeptide reads, in one-letter code: Tyrosine--tRNA ligase (428 aa).

Tyr-41 provides a ligand contact to L-tyrosine. A 'HIGH' region motif is present at residues 46 to 55; that stretch reads PTADSLHLGH. L-tyrosine is bound by residues Tyr-179 and Gln-183. The 'KMSKS' region motif lies at 239-243; it reads KFGKT. Residue Lys-242 coordinates ATP. Positions 361–418 constitute an S4 RNA-binding domain; it reads ADLMQALVDSELQPSRGQARKTIASNAVTINGEKQSDPEYFFQDSDILFGRYTLLRRG.

The protein belongs to the class-I aminoacyl-tRNA synthetase family. TyrS type 1 subfamily. Homodimer.

The protein localises to the cytoplasm. It catalyses the reaction tRNA(Tyr) + L-tyrosine + ATP = L-tyrosyl-tRNA(Tyr) + AMP + diphosphate + H(+). Its function is as follows. Catalyzes the attachment of tyrosine to tRNA(Tyr) in a two-step reaction: tyrosine is first activated by ATP to form Tyr-AMP and then transferred to the acceptor end of tRNA(Tyr). The protein is Tyrosine--tRNA ligase of Citrobacter koseri (strain ATCC BAA-895 / CDC 4225-83 / SGSC4696).